The primary structure comprises 1292 residues: Kinesin-like protein KIN-12A (1292 aa).

The interval 1–86 (MKKHFTLPRN…LSAETATESG (86 aa)) is disordered. The span at 19–29 (PHSPNPSISKS) shows a compositional bias: low complexity. A compositionally biased stretch (pro residues) spans 62–71 (PLPPRPPPSN). Residues 91 to 426 (GVKVIVRMKP…LRFAQRAKAI (336 aa)) form the Kinesin motor domain. 165 to 172 (GQTGSGKT) contributes to the ATP binding site. 3 microtubules-binding regions span residues 293 to 297 (SSRSH), 326 to 332 (VDLAGSE), and 375 to 379 (HIPYR). The segment at 424 to 461 (KAIQNKAVVNEVMQDDVNFLRGVIHQLRDELQRMKNDG) is neck. The segment at 677-724 (SVSPTIRNSRKSLKTSELSTASQKDSEGENLVTEAADPSPATSKKMNN) is disordered. Coiled coils occupy residues 945 to 992 (EVLK…CYID) and 1047 to 1232 (SEEL…NQLV).

Belongs to the TRAFAC class myosin-kinesin ATPase superfamily. Kinesin family. KIN-12 subfamily. Homodimer and heterodimer with KIN12B. Interacts with TIO.

It localises to the cytoplasm. Its subcellular location is the cytoskeleton. The protein localises to the phragmoplast. Its function is as follows. Plus-end directed kinesin-like motor enzyme that plays a critical role in the organization of phragmoplast microtubules during cytokinesis. Constitutes a signaling module in association with serine/threonine-protein kinase TIO that is required to support phragmoplast expansion and cell-plate growth in plant cells. Binds microtubules in an ATP-sensitive manner. This is Kinesin-like protein KIN-12A from Arabidopsis thaliana (Mouse-ear cress).